A 464-amino-acid polypeptide reads, in one-letter code: Protein FAM90A13 (464 aa).

Disordered stretches follow at residues 1–42 (MMAR…DPRL), 69–389 (VPAT…HDGA), and 411–437 (APSF…SEAP). 2 stretches are compositionally biased toward basic and acidic residues: residues 74–89 (GKKE…KPRG) and 97–114 (NKDK…DPQR). Residues 180-197 (LASLSPLRKASLSSSSSL) are compositionally biased toward low complexity.

This sequence belongs to the FAM90 family.

This chain is Protein FAM90A13, found in Homo sapiens (Human).